Reading from the N-terminus, the 355-residue chain is Protein-tyrosine sulfotransferase 1 (355 aa).

At 1–8 (MIGKLKQN) the chain is on the cytoplasmic side. Residues 9-25 (LLVACLVISSVTVFYLC) form a helical; Signal-anchor for type II membrane protein membrane-spanning segment. The Lumenal portion of the chain corresponds to 26-355 (RHAMDCHHRI…QKSPEKPNPS (330 aa)). N-linked (GlcNAc...) asparagine glycosylation occurs at Asn55. 76–80 (RSGTT) contacts 3'-phosphoadenylyl sulfate. Residues Cys94 and Cys154 are joined by a disulfide bond. Glu97 functions as the Proton donor/acceptor in the catalytic mechanism. Residues 99–103 (RVIPR) form an interaction with peptide substrate region. Positions 181, 189, and 193 each coordinate 3'-phosphoadenylyl sulfate. Cys223 and Cys230 are oxidised to a cystine. 3'-phosphoadenylyl sulfate-binding positions include Tyr235, 282–291 (STDQVIKPVN), and Lys297. Residues 325-355 (HANPPNYGRPDPLVLDNTRRLQKSPEKPNPS) form a disordered region. The span at 341-355 (NTRRLQKSPEKPNPS) shows a compositional bias: basic and acidic residues.

It belongs to the protein sulfotransferase family.

It localises to the golgi apparatus membrane. It catalyses the reaction L-tyrosyl-[protein] + 3'-phosphoadenylyl sulfate = O-sulfo-L-tyrosine-[protein] + adenosine 3',5'-bisphosphate + H(+). Functionally, catalyzes the O-sulfation of tyrosine residues within acidic motifs of polypeptides, using 3'-phosphoadenylyl sulfate (PAPS) as cosubstrate. In Danio rerio (Zebrafish), this protein is Protein-tyrosine sulfotransferase 1 (tpst1).